A 442-amino-acid chain; its full sequence is GDP-L-galactose phosphorylase 1 (442 aa).

Histidine 238 acts as the Tele-GMP-histidine intermediate in catalysis.

The protein belongs to the GDPGP1 family. As to quaternary structure, interacts with TLP1. As to expression, expressed in leaves, stems, roots, flowers and siliques. Highest expression in green tissues.

It localises to the cytoplasm. The protein resides in the nucleus. The catalysed reaction is GDP-beta-L-galactose + phosphate = beta-L-galactose 1-phosphate + GDP + H(+). Its pathway is cofactor biosynthesis; L-ascorbate biosynthesis via GDP-alpha-D-mannose pathway; L-ascorbate from GDP-alpha-D-mannose: step 2/5. With respect to regulation, not inhibited by dithiothreitol, N-ethylmaleimide, phenylmethane sulfonyl fluoride, ascorbate, L-galactose and L-galactonolactone. In terms of biological role, catalyzes a reaction of the Smirnoff-Wheeler pathway, the major route to ascorbate biosynthesis in plants. Acts as a phosphorylase rather than as a transferase. Uses preferentially GDP-L-galactose and GDP-D-glucose as substrates. Lower activity with GDP-L-fucose, very low activity with GDP-D-mannose, and no activity with UDP-D-glucose, UDP-D-galactose or ADP-D-glucose. Highly specific for inorganic phosphate as the guanylyl acceptor. The protein is GDP-L-galactose phosphorylase 1 (VTC2) of Arabidopsis thaliana (Mouse-ear cress).